We begin with the raw amino-acid sequence, 414 residues long: Signal recognition particle receptor FtsY (414 aa).

GTP is bound by residues 216–223, 298–302, and 362–365; these read GVNGVGKT, DTAGR, and TKLD.

Belongs to the GTP-binding SRP family. FtsY subfamily. Part of the signal recognition particle protein translocation system, which is composed of SRP and FtsY. SRP is a ribonucleoprotein composed of Ffh and a 4.5S RNA molecule.

It is found in the cell inner membrane. It localises to the cytoplasm. The catalysed reaction is GTP + H2O = GDP + phosphate + H(+). Its function is as follows. Involved in targeting and insertion of nascent membrane proteins into the cytoplasmic membrane. Acts as a receptor for the complex formed by the signal recognition particle (SRP) and the ribosome-nascent chain (RNC). Interaction with SRP-RNC leads to the transfer of the RNC complex to the Sec translocase for insertion into the membrane, the hydrolysis of GTP by both Ffh and FtsY, and the dissociation of the SRP-FtsY complex into the individual components. The protein is Signal recognition particle receptor FtsY of Haemophilus influenzae (strain ATCC 51907 / DSM 11121 / KW20 / Rd).